Here is a 618-residue protein sequence, read N- to C-terminus: Dihydroxy-acid dehydratase 1 (618 aa).

Residue D81 coordinates Mg(2+). C122 is a binding site for [2Fe-2S] cluster. Positions 123 and 124 each coordinate Mg(2+). K124 carries the N6-carboxylysine modification. C195 contributes to the [2Fe-2S] cluster binding site. Position 491 (E491) interacts with Mg(2+). The Proton acceptor role is filled by S517.

It belongs to the IlvD/Edd family. In terms of assembly, homodimer. It depends on [2Fe-2S] cluster as a cofactor. Requires Mg(2+) as cofactor.

It carries out the reaction (2R)-2,3-dihydroxy-3-methylbutanoate = 3-methyl-2-oxobutanoate + H2O. It catalyses the reaction (2R,3R)-2,3-dihydroxy-3-methylpentanoate = (S)-3-methyl-2-oxopentanoate + H2O. It participates in amino-acid biosynthesis; L-isoleucine biosynthesis; L-isoleucine from 2-oxobutanoate: step 3/4. It functions in the pathway amino-acid biosynthesis; L-valine biosynthesis; L-valine from pyruvate: step 3/4. In terms of biological role, functions in the biosynthesis of branched-chain amino acids. Catalyzes the dehydration of (2R,3R)-2,3-dihydroxy-3-methylpentanoate (2,3-dihydroxy-3-methylvalerate) into 2-oxo-3-methylpentanoate (2-oxo-3-methylvalerate) and of (2R)-2,3-dihydroxy-3-methylbutanoate (2,3-dihydroxyisovalerate) into 2-oxo-3-methylbutanoate (2-oxoisovalerate), the penultimate precursor to L-isoleucine and L-valine, respectively. The chain is Dihydroxy-acid dehydratase 1 from Pseudoalteromonas translucida (strain TAC 125).